Reading from the N-terminus, the 101-residue chain is ATP synthase subunit c (101 aa).

2 helical membrane-spanning segments follow: residues 35-55 (IGAGLASVGILGTGVGQGLIG) and 81-101 (GISESGAIYSLVIAILLIFVV).

It belongs to the ATPase C chain family. As to quaternary structure, F-type ATPases have 2 components, F(1) - the catalytic core - and F(0) - the membrane proton channel. F(1) has five subunits: alpha(3), beta(3), gamma(1), delta(1), epsilon(1). F(0) has three main subunits: a(1), b(2) and c(10-14). The alpha and beta chains form an alternating ring which encloses part of the gamma chain. F(1) is attached to F(0) by a central stalk formed by the gamma and epsilon chains, while a peripheral stalk is formed by the delta and b chains.

It is found in the cell membrane. Its function is as follows. F(1)F(0) ATP synthase produces ATP from ADP in the presence of a proton or sodium gradient. F-type ATPases consist of two structural domains, F(1) containing the extramembraneous catalytic core and F(0) containing the membrane proton channel, linked together by a central stalk and a peripheral stalk. During catalysis, ATP synthesis in the catalytic domain of F(1) is coupled via a rotary mechanism of the central stalk subunits to proton translocation. Key component of the F(0) channel; it plays a direct role in translocation across the membrane. A homomeric c-ring of between 10-14 subunits forms the central stalk rotor element with the F(1) delta and epsilon subunits. This Mycoplasma capricolum subsp. capricolum (strain California kid / ATCC 27343 / NCTC 10154) protein is ATP synthase subunit c.